Consider the following 435-residue polypeptide: Chromatin structure-remodeling complex subunit RSC7 (435 aa).

Residues 1 to 97 (MSDSEGGLAS…DKGVTRSRNR (97 aa)) form a disordered region. Residues 30–66 (DTEDLDIDENDENEDDDYREEEANEGVNEEEISDEEE) show a composition bias toward acidic residues. The residue at position 86 (Ser86) is a Phosphoserine. Positions 248–435 (ELRTKGNVIE…QNFEKCNEYI (188 aa)) are functional region; able to complement all NPL6 null allele phenotypes.

It belongs to the RSC7/SWP82 family. RSC7 subfamily. As to quaternary structure, interacts with ARP7, ARP9, RSC3, RSC8, RSC30 and STH1. Component of the two forms of the RSC complex composed of at least either RSC1 or RSC2, and ARP7, ARP9, LDB7, NPL6, RSC3, RSC30, RSC4, RSC58, RSC6, RSC8, RSC9, SFH1, STH1, HTL1 and probably RTT102. The complexes interact with histone and histone variant components of centromeric chromatin. Component of a fungal-specific module (HTL1-LDB7-NPL6-RSC3-RSC30) within the RSC complex.

The protein resides in the nucleus. In terms of biological role, component of the chromatin structure remodeling complex (RSC), which is involved in transcription regulation and nucleosome positioning. RSC is responsible for the transfer of a histone octamer from a nucleosome core particle to naked DNA. The reaction requires ATP and involves an activated RSC-nucleosome intermediate. Remodeling reaction also involves DNA translocation, DNA twist and conformational change. As a reconfigurer of centromeric and flanking nucleosomes, RSC complex is required both for proper kinetochore function in chromosome segregation and, via a PKC1-dependent signaling pathway, for organization of the cellular cytoskeleton. Together with HTL1, LDB7, RSC3, RSC30 components, defines a fungal-specific module within the RSC complex that plays a role in many cellular functions including the maintenance of cell wall integrity. Acidic protein important for nuclear protein localization. In Saccharomyces cerevisiae (strain ATCC 204508 / S288c) (Baker's yeast), this protein is Chromatin structure-remodeling complex subunit RSC7 (NPL6).